Consider the following 302-residue polypeptide: Oxygen-dependent coproporphyrinogen-III oxidase (302 aa).

Position 94 (Ser94) interacts with substrate. The a divalent metal cation site is built by His98 and His108. The Proton donor role is filled by His108. 110 to 112 contacts substrate; sequence NVR. The a divalent metal cation site is built by His147 and His177. The important for dimerization stretch occupies residues 242 to 277; sequence YVEFNLVYDRGTLFGLQTGGRTESILMSMPPLVRWQ. 260 to 262 provides a ligand contact to substrate; the sequence is GGR.

Belongs to the aerobic coproporphyrinogen-III oxidase family. Homodimer. Requires a divalent metal cation as cofactor.

The protein localises to the cytoplasm. It catalyses the reaction coproporphyrinogen III + O2 + 2 H(+) = protoporphyrinogen IX + 2 CO2 + 2 H2O. The protein operates within porphyrin-containing compound metabolism; protoporphyrin-IX biosynthesis; protoporphyrinogen-IX from coproporphyrinogen-III (O2 route): step 1/1. Involved in the heme biosynthesis. Catalyzes the aerobic oxidative decarboxylation of propionate groups of rings A and B of coproporphyrinogen-III to yield the vinyl groups in protoporphyrinogen-IX. This chain is Oxygen-dependent coproporphyrinogen-III oxidase, found in Shewanella putrefaciens (strain CN-32 / ATCC BAA-453).